The primary structure comprises 76 residues: U1-cyrtautoxin-As1b (76 aa).

Intrachain disulfides connect Cys23/Cys37, Cys30/Cys51, Cys36/Cys66, and Cys69/Cys76.

It belongs to the neurotoxin 21 family. In terms of tissue distribution, expressed by the venom gland.

Its subcellular location is the secreted. In terms of biological role, neurotoxin with probable ion channel impairing activity. Is both paralytic and lethal, when injected into lepidopteran larvae. The protein is U1-cyrtautoxin-As1b of Apomastus schlingeri (Trap-door spider).